Here is a 120-residue protein sequence, read N- to C-terminus: Protein VraC (120 aa).

The polypeptide is Protein VraC (Staphylococcus epidermidis (strain ATCC 12228 / FDA PCI 1200)).